A 122-amino-acid chain; its full sequence is UPF0102 protein CE1920 (122 aa).

It belongs to the UPF0102 family.

This chain is UPF0102 protein CE1920, found in Corynebacterium efficiens (strain DSM 44549 / YS-314 / AJ 12310 / JCM 11189 / NBRC 100395).